A 522-amino-acid polypeptide reads, in one-letter code: Cytochrome b mRNA maturase bI3 (522 aa).

Residues Met1–Asn31 lie on the Mitochondrial matrix side of the membrane. Residues Met1–Pro163 are cytochrome b. Residues Val32–Met52 form a helical membrane-spanning segment. The Mitochondrial intermembrane segment spans residues His53–Asn84. A helical transmembrane segment spans residues Gly85 to Ser105. Residues Tyr106–Arg110 lie on the Mitochondrial matrix side of the membrane. The helical transmembrane segment at Val111–Gly131 threads the bilayer. Topologically, residues Tyr132–Met154 are mitochondrial intermembrane. A helical membrane pass occupies residues Pro155–Ile175. The interval Leu164–Gln522 is maturase. Topologically, residues Ser176–Gln522 are mitochondrial matrix.

The protein in the N-terminal section; belongs to the cytochrome b family. It in the C-terminal section; belongs to the LAGLIDADG endonuclease family.

Its subcellular location is the mitochondrion inner membrane. Its function is as follows. Mitochondrial mRNA maturase required for splicing of intron 3 of the cytochrome b (COB) gene, containing its own coding sequence. The protein is Cytochrome b mRNA maturase bI3 (bI3) of Debaryomyces hansenii (strain ATCC 36239 / CBS 767 / BCRC 21394 / JCM 1990 / NBRC 0083 / IGC 2968) (Yeast).